Here is a 172-residue protein sequence, read N- to C-terminus: Alpha-crystallin A chain (172 aa).

The residue at position 1 (Met-1) is an N-acetylmethionine. The required for complex formation with BFSP1 and BFSP2 stretch occupies residues Met-1–Glu-63. Gln-6 carries the post-translational modification Deamidated glutamine; partial. At Ser-45 the chain carries Phosphoserine. Position 50 is a deamidated glutamine; partial (Gln-50). The 112-residue stretch at Leu-52 to Glu-163 folds into the sHSP domain. Residue Lys-70 is modified to N6-acetyllysine. Gln-90 bears the Deamidated glutamine; partial mark. Position 99 is an N6-acetyllysine (Lys-99). Position 100 (His-100) interacts with Zn(2+). The residue at position 101 (Asn-101) is a Deamidated asparagine; partial. Residues Glu-102 and His-107 each coordinate Zn(2+). At Ser-122 the chain carries Phosphoserine. Asn-123 carries the post-translational modification Deamidated asparagine; partial. Gln-147 bears the Deamidated glutamine; partial mark. His-154 serves as a coordination point for Zn(2+). O-linked (GlcNAc) serine glycosylation is present at Ser-168.

Belongs to the small heat shock protein (HSP20) family. In terms of assembly, heteromer composed of three CRYAA and one CRYAB subunits. Inter-subunit bridging via zinc ions enhances stability, which is crucial as there is no protein turn over in the lens. Can also form homodimers and homotetramers (dimers of dimers) which serve as the building blocks of homooligomers. Within homooligomers, the zinc-binding motif is created from residues of 3 different molecules. His-100 and Glu-102 from one molecule are ligands of the zinc ion, and His-107 and His-154 residues from additional molecules complete the site with tetrahedral coordination geometry. Part of a complex required for lens intermediate filament formation composed of BFSP1, BFSP2 and CRYAA. Post-translationally, acetylation at Lys-70 may increase chaperone activity. In terms of processing, undergoes age-dependent proteolytical cleavage at the C-terminus.

Its subcellular location is the cytoplasm. It localises to the nucleus. Its function is as follows. Contributes to the transparency and refractive index of the lens. Acts as a chaperone, preventing aggregation of various proteins under a wide range of stress conditions. Required for the correct formation of lens intermediate filaments as part of a complex composed of BFSP1, BFSP2 and CRYAA. This is Alpha-crystallin A chain (CRYAA) from Macaca mulatta (Rhesus macaque).